The chain runs to 369 residues: UPF0283 membrane protein RPA1583 (369 aa).

The tract at residues 1–61 is disordered; the sequence is MTERVPPRRP…APPPPPPRAR (61 aa). The span at 34–51 shows a compositional bias: low complexity; it reads AKPSAKADARPAASAAGA. 3 helical membrane passes run 90 to 110, 124 to 144, and 239 to 259; these read WGTVFWSAATGLVSLAFWLWI, LGTIGMVLALLAGGSLAIIIG, and VSLVTAISPKALIDVLFVAIA.

It belongs to the UPF0283 family.

The protein localises to the cell inner membrane. The protein is UPF0283 membrane protein RPA1583 of Rhodopseudomonas palustris (strain ATCC BAA-98 / CGA009).